Reading from the N-terminus, the 355-residue chain is Guanine nucleotide-binding protein alpha-12 subunit (355 aa).

In terms of domain architecture, G-alpha spans 28–355; sequence RQINLLLLGS…EQNLKTLMMQ (328 aa). Residues 31-44 are G1 motif; that stretch reads NLLLLGSGESGKST. GTP contacts are provided by residues 36 to 43, 176 to 182, 201 to 205, 270 to 273, and alanine 327; these read GSGESGKS, LFCRKAT, DVGGQ, and NKND. Positions 43 and 182 each coordinate Mg(2+). The tract at residues 174–182 is G2 motif; it reads DILFCRKAT. The interval 197-206 is G3 motif; the sequence is FRFIDVGGQR. Residues 266 to 273 form a G4 motif region; it reads ILFMNKND. Positions 325 to 330 are G5 motif; it reads TTAVDT.

Belongs to the G-alpha family. As to quaternary structure, g proteins are composed of 3 units; alpha, beta and gamma. The alpha chain contains the guanine nucleotide binding site.

Functionally, guanine nucleotide-binding proteins (G proteins) are involved as modulators or transducers in various transmembrane signaling systems. May play a role in resistance to fungal infection in the epidermis by regulating the up-regulation of several antimicrobial peptides of the NLP and CNC families. Upstream of plc-3, egl-8, tpa-1 and the p38-like pathway, required for the expression of antimicrobial peptide nlp-29 in the epidermis in response to fungal infection or physical injury. This is Guanine nucleotide-binding protein alpha-12 subunit (gpa-12) from Caenorhabditis briggsae.